Reading from the N-terminus, the 411-residue chain is Zinc metalloproteinase/disintegrin (411 aa).

A signal peptide spans 1–20; the sequence is MIEVLLVTICLAVFPYQGSS. Positions 21–190 are excised as a propeptide; sequence IILESGNVND…KASQLYLTPE (170 aa). One can recognise a Peptidase M12B domain in the interval 197–395; sequence RYVKLAIVVD…SKPQCILNAP (199 aa). Position 284 (Asp284) interacts with Ca(2+). 3 disulfides stabilise this stretch: Cys308–Cys390, Cys352–Cys374, and Cys354–Cys357. His333 provides a ligand contact to Zn(2+). Glu334 is a catalytic residue. Zn(2+) is bound by residues His337 and His343. Cys390 and Asn393 together coordinate Ca(2+). Positions 396 to 411 are excised as a propeptide; that stretch reads LRTDTVSTPVSGNEPL.

It belongs to the venom metalloproteinase (M12B) family. P-II subfamily. As to quaternary structure, monomer. Zn(2+) serves as cofactor. In terms of tissue distribution, expressed by the venom gland.

The protein localises to the secreted. Functionally, snake venom metalloproteinase that impairs hemostasis in the envenomed animal. The protein is Zinc metalloproteinase/disintegrin of Protobothrops mucrosquamatus (Taiwan habu).